The following is a 122-amino-acid chain: Large ribosomal subunit protein uL14c (122 aa).

Belongs to the universal ribosomal protein uL14 family. In terms of assembly, part of the 50S ribosomal subunit.

The protein resides in the plastid. The protein localises to the chloroplast. Its function is as follows. Binds to 23S rRNA. The sequence is that of Large ribosomal subunit protein uL14c from Platanus occidentalis (Sycamore).